The chain runs to 469 residues: Acetyl-CoA decarbonylase/synthase complex subunit beta 1 (469 aa).

[Ni-Fe-S] cluster is bound by residues Cys-189, Cys-192, Cys-278, and Cys-280.

This sequence belongs to the CdhC family. As to quaternary structure, monomer. The ACDS complex is made up of alpha, epsilon, beta, gamma and delta chains with a probable stoichiometry of (alpha(2)epsilon(2))(4)-beta(8)-(gamma(1)delta(1))(8) (Potential). It depends on [Ni-Fe-S] cluster as a cofactor.

The enzyme catalyses Co(I)-[corrinoid Fe-S protein] + acetyl-CoA + H(+) = methyl-Co(III)-[corrinoid Fe-S protein] + CO + CoA. It participates in one-carbon metabolism; methanogenesis from acetate. Functionally, part of a complex that catalyzes the reversible cleavage of acetyl-CoA, allowing growth on acetate as sole source of carbon and energy. The alpha-epsilon complex generates CO from CO(2), while the beta subunit (this protein) combines the CO with CoA and a methyl group to form acetyl-CoA. The methyl group, which is incorporated into acetyl-CoA, is transferred to the beta subunit by a corrinoid iron-sulfur protein (the gamma-delta complex). The sequence is that of Acetyl-CoA decarbonylase/synthase complex subunit beta 1 (cdhC1) from Methanosarcina mazei (strain ATCC BAA-159 / DSM 3647 / Goe1 / Go1 / JCM 11833 / OCM 88) (Methanosarcina frisia).